Consider the following 228-residue polypeptide: MSKLSHPQVLEQIKYGLIASCQPVDNGPMDSPEIVAAMAQASVIGGAAGLRIEGIENLKATRNVVNVPIIGIVKRDLPDSPVRISPFLQDIEELAAAGADIIAFDGTDRVRPTTREAIIKRIKELGCLAMADCSNFEEGMYCHNLGVEIIGSTMSGYTGGEIPAEPDYQLVKDLNAAGCRVMAEGRYNTPELAKTAIEIGAYSVTVGSALTRLEHIVSWFADAVKSAK.

The protein belongs to the NanE family.

The enzyme catalyses an N-acyl-D-glucosamine 6-phosphate = an N-acyl-D-mannosamine 6-phosphate. The protein operates within amino-sugar metabolism; N-acetylneuraminate degradation; D-fructose 6-phosphate from N-acetylneuraminate: step 3/5. Functionally, converts N-acetylmannosamine-6-phosphate (ManNAc-6-P) to N-acetylglucosamine-6-phosphate (GlcNAc-6-P). This Pasteurella multocida (strain Pm70) protein is Putative N-acetylmannosamine-6-phosphate 2-epimerase.